The following is a 549-amino-acid chain: Copalyl diphosphate synthase (549 aa).

The short motif at 321-326 is the DXDDTA motif element; it reads DADDTA. The short motif at 451–457 is the QXXDGSW motif element; the sequence is QRDDGSW.

This sequence belongs to the terpene synthase family. It depends on Mg(2+) as a cofactor.

It carries out the reaction (2E,6E,10E)-geranylgeranyl diphosphate = (+)-copalyl diphosphate. Involved in the biosynthesis of the labdane-type bicyclic diterpene labda-8(17),12(E),14-triene. Catalyzes the conversion of geranylgeranyl diphosphate (GGDP) into (+)-copalyl diphosphate. This Streptomyces anulatus (Streptomyces chrysomallus) protein is Copalyl diphosphate synthase.